The chain runs to 636 residues: Leucine-rich repeat and fibronectin type-III domain-containing protein 4 (636 aa).

Positions 1-16 (MAPPLLLLLLASGAAA) are cleaved as a signal peptide. Positions 17–48 (CPLPCVCQNLSESLSTLCAHRGLLFVPPNVDR) constitute an LRRNT domain. At 17–518 (CPLPCVCQNL…LQAHVLGGTL (502 aa)) the chain is on the extracellular side. Asn-25 carries N-linked (GlcNAc...) asparagine glycosylation. 7 LRR repeats span residues 49–70 (RTVELRLADNFIQALGPPDFRN), 73–94 (GLVDLTLSRNAITRIGARSFGD), 97–118 (SLRSLHLDGNRLVELGSSSLRG), 121–142 (NLQHLILSGNQLGRIAPGAFDD), 146–169 (SLEDLDVSYNNLRQVPWAGIGSMP), 170–191 (ALHTLNLDHNLIDALPPGVFAQ), and 194–215 (QLSRLDLTSNRLATLAPDPLFS). The region spanning 234–280 (NPLHCNCELLWLRRLARPDDLETCASPPTLAGRYFWAVPEGEFSCEP) is the LRRCT domain. The Ig-like domain occupies 281-367 (PLIARHTQRL…GEATARVELR (87 aa)). Cys-302 and Cys-351 are disulfide-bonded. Asn-333 carries N-linked (GlcNAc...) asparagine glycosylation. Positions 405 to 502 (SEPAVQVTEV…GCAHFSTLPA (98 aa)) constitute a Fibronectin type-III domain. A helical transmembrane segment spans residues 519–539 (TVAVGGVLVAALLVFTVALLV). The Cytoplasmic portion of the chain corresponds to 540–636 (RGRGAGNGRL…SAERLEESVV (97 aa)). Residues 556–585 (VQSQTNGGTSPMPKSHPPRSPPPRPQRSCS) are disordered. The segment covering 569-580 (KSHPPRSPPPRP) has biased composition (pro residues). 2 positions are modified to phosphoserine: Ser-585 and Ser-627. A PDZ-binding motif is present at residues 633–636 (ESVV).

The protein belongs to the LRFN family. In terms of assembly, forms heteromeric complexes with LRFN1 and LRFN2. Can form heteromeric complexes with LRFN3 and LRFN5. Unable to form homophilic interactions across cell junctions. Interacts with DLG1, DLG2, DLG3 and DLG4. In terms of processing, glycosylated.

It localises to the membrane. Functionally, promotes neurite outgrowth in hippocampal neurons. May play a role in redistributing DLG4 to the cell periphery. In Rattus norvegicus (Rat), this protein is Leucine-rich repeat and fibronectin type-III domain-containing protein 4 (Lrfn4).